Consider the following 75-residue polypeptide: Protein SlyX homolog (75 aa).

The protein belongs to the SlyX family.

The protein is Protein SlyX homolog of Vibrio atlanticus (strain LGP32) (Vibrio splendidus (strain Mel32)).